The following is a 214-amino-acid chain: ER lumen protein-retaining receptor (214 aa).

Residues methionine 1 to asparagine 4 lie on the Lumenal side of the membrane. Residues leucine 5–threonine 23 form a helical membrane-spanning segment. The Cytoplasmic portion of the chain corresponds to lysine 24 to arginine 37. A helical membrane pass occupies residues serine 38 to tyrosine 55. Residues asparagine 56–threonine 63 lie on the Lumenal side of the membrane. The helical transmembrane segment at isoleucine 64 to lysine 82 threads the bilayer. Over arginine 83 to tryptophan 98 the chain is Cytoplasmic. Residues tyrosine 99–threonine 112 traverse the membrane as a helical segment. Over glutamate 113–glutamate 119 the chain is Lumenal. Residues isoleucine 120–leucine 139 form a helical membrane-spanning segment. The Cytoplasmic segment spans residues leucine 140–serine 151. The helical transmembrane segment at glutamine 152 to tyrosine 170 threads the bilayer. Topologically, residues arginine 171 to proline 181 are lumenal. A helical membrane pass occupies residues leucine 182–isoleucine 202. Residues lysine 203–proline 214 lie on the Cytoplasmic side of the membrane.

Belongs to the ERD2 family.

The protein localises to the endoplasmic reticulum membrane. Required for the retention of luminal endoplasmic reticulum proteins. Determines the specificity of the luminal ER protein retention system. Also required for normal vesicular traffic through the Golgi. The protein is ER lumen protein-retaining receptor of Entamoeba histolytica (strain ATCC 30459 / HM-1:IMSS / ABRM).